Here is a 268-residue protein sequence, read N- to C-terminus: 4-pyridoxolactonase (268 aa).

Residues H96, H98, D100, H101, H185, D207, and H252 each contribute to the Zn(2+) site. Catalysis depends on D100, which acts as the Proton donor/acceptor.

The protein belongs to the metallo-beta-lactamase superfamily. Homodimer. Requires Zn(2+) as cofactor.

It carries out the reaction 4-pyridoxolactone + H2O = 4-pyridoxate + H(+). Its pathway is cofactor degradation; B6 vitamer degradation; 4-pyridoxate from pyridoxal: step 2/2. With respect to regulation, inhibited by Hg(2+). Functionally, involved in the degradation of pyridoxine or pyridoxamine (free, phosphate-unbound, forms of vitamin B6). Hydrolyzes 4-pyridoxolactone to 4-pyridoxic acid. Has lower activity toward N-hexanoyl-D,L-homoserine lactone, but is not active toward 5-pyridoxolactone and gamma-butyrolactone. This is 4-pyridoxolactonase from Mesorhizobium japonicum (strain LMG 29417 / CECT 9101 / MAFF 303099) (Mesorhizobium loti (strain MAFF 303099)).